A 284-amino-acid polypeptide reads, in one-letter code: Shikimate dehydrogenase (NADP(+)) (284 aa).

Residues S23 to S25 and T70 contribute to the shikimate site. The Proton acceptor role is filled by K74. E86 provides a ligand contact to NADP(+). The shikimate site is built by N95 and D111. Residues G135–A139, N159–R164, and A227 contribute to the NADP(+) site. Y229 serves as a coordination point for shikimate. Residue G251 participates in NADP(+) binding.

Belongs to the shikimate dehydrogenase family. In terms of assembly, homodimer.

The catalysed reaction is shikimate + NADP(+) = 3-dehydroshikimate + NADPH + H(+). Its pathway is metabolic intermediate biosynthesis; chorismate biosynthesis; chorismate from D-erythrose 4-phosphate and phosphoenolpyruvate: step 4/7. Involved in the biosynthesis of the chorismate, which leads to the biosynthesis of aromatic amino acids. Catalyzes the reversible NADPH linked reduction of 3-dehydroshikimate (DHSA) to yield shikimate (SA). This Rubrobacter xylanophilus (strain DSM 9941 / JCM 11954 / NBRC 16129 / PRD-1) protein is Shikimate dehydrogenase (NADP(+)).